We begin with the raw amino-acid sequence, 84 residues long: Putative defensin-like protein 63 (84 aa).

An N-terminal signal peptide occupies residues 1 to 21 (MDIRKTYVIIFFVGILTISFS). Disulfide bonds link Cys-40/Cys-81, Cys-44/Cys-67, Cys-53/Cys-79, and Cys-57/Cys-80.

Belongs to the DEFL family.

It localises to the secreted. The protein is Putative defensin-like protein 63 of Arabidopsis thaliana (Mouse-ear cress).